The sequence spans 78 residues: Acyl carrier protein (78 aa).

Residues 1-76 (MSLEERVKEI…DVINYLKEKV (76 aa)) enclose the Carrier domain. Position 36 is an O-(pantetheine 4'-phosphoryl)serine (serine 36).

The protein belongs to the acyl carrier protein (ACP) family. In terms of processing, 4'-phosphopantetheine is transferred from CoA to a specific serine of apo-ACP by AcpS. This modification is essential for activity because fatty acids are bound in thioester linkage to the sulfhydryl of the prosthetic group.

Its subcellular location is the cytoplasm. The protein operates within lipid metabolism; fatty acid biosynthesis. Functionally, carrier of the growing fatty acid chain in fatty acid biosynthesis. The sequence is that of Acyl carrier protein from Aquifex aeolicus (strain VF5).